Here is a 74-residue protein sequence, read N- to C-terminus: Homeobox protein H40 (74 aa).

The segment at residues Ala8–Asn67 is a DNA-binding region (homeobox).

Its subcellular location is the nucleus. This is Homeobox protein H40 from Apis mellifera (Honeybee).